The primary structure comprises 185 residues: Thiol:disulfide interchange protein DsbE (185 aa).

The Cytoplasmic segment spans residues 1-4 (MKRN). A helical membrane pass occupies residues 5 to 25 (VLLLPLLIFLLIAAALLWQLA). Residues 26 to 185 (RNAQGDDPTN…WDRYSREAAQ (160 aa)) lie on the Periplasmic side of the membrane. One can recognise a Thioredoxin domain in the interval 39–177 (ALTGKPVPAF…WESELKPLWD (139 aa)). Cys80 and Cys83 are joined by a disulfide.

The protein belongs to the thioredoxin family. DsbE subfamily.

The protein localises to the cell inner membrane. Its function is as follows. Involved in disulfide bond formation. Catalyzes a late, reductive step in the assembly of periplasmic c-type cytochromes, probably the reduction of disulfide bonds of the apocytochrome c to allow covalent linkage with the heme. Possible subunit of a heme lyase. The chain is Thiol:disulfide interchange protein DsbE (dsbE1) from Salmonella typhimurium (strain LT2 / SGSC1412 / ATCC 700720).